A 316-amino-acid polypeptide reads, in one-letter code: Nod factor export ATP-binding protein I (316 aa).

One can recognise an ABC transporter domain in the interval 18 to 248 (IDFSDVSKTY…LIGCEVIEIY (231 aa)). 50-57 (GPNGAGKS) is a binding site for ATP.

The protein belongs to the ABC transporter superfamily. Lipooligosaccharide exporter (TC 3.A.1.102) family. In terms of assembly, the complex is composed of two ATP-binding proteins (NodI) and two transmembrane proteins (NodJ).

Its subcellular location is the cell inner membrane. Its function is as follows. Part of the ABC transporter complex NodIJ involved in the export of the nodulation factors (Nod factors), the bacterial signal molecules that induce symbiosis and subsequent nodulation induction. Nod factors are LCO (lipo-chitin oligosaccharide), a modified beta-1,4-linked N-acetylglucosamine oligosaccharide. This subunit is responsible for energy coupling to the transport system. The sequence is that of Nod factor export ATP-binding protein I from Rhizobium etli (strain ATCC 51251 / DSM 11541 / JCM 21823 / NBRC 15573 / CFN 42).